Consider the following 197-residue polypeptide: Adenylate kinase (197 aa).

Glycine 16–threonine 21 is an ATP binding site. The segment at serine 36–valine 65 is NMP. AMP-binding positions include threonine 37, arginine 42, glutamine 63–valine 65, glycine 90–arginine 93, and glutamine 97. Residues glutamate 131–aspartate 147 are LID. Arginine 132 lines the ATP pocket. Positions 144 and 155 each coordinate AMP. ATP is bound at residue glycine 183.

It belongs to the adenylate kinase family. As to quaternary structure, monomer.

It is found in the cytoplasm. It carries out the reaction AMP + ATP = 2 ADP. It participates in purine metabolism; AMP biosynthesis via salvage pathway; AMP from ADP: step 1/1. Catalyzes the reversible transfer of the terminal phosphate group between ATP and AMP. Plays an important role in cellular energy homeostasis and in adenine nucleotide metabolism. The protein is Adenylate kinase of Deinococcus geothermalis (strain DSM 11300 / CIP 105573 / AG-3a).